A 132-amino-acid polypeptide reads, in one-letter code: Agouti-signaling protein (132 aa).

A signal peptide spans 1 to 22; it reads MDVTRLLLATLLVFLCFFTVYS. Asn39 carries an N-linked (GlcNAc...) asparagine glycan. The disordered stretch occupies residues 62–93; the sequence is ISRKEAEKKRSSKKEASMKKVAQPRTPLSAPC. The segment covering 63-79 has biased composition (basic and acidic residues); it reads SRKEAEKKRSSKKEASM. 5 cysteine pairs are disulfide-bonded: Cys93–Cys108, Cys100–Cys114, Cys107–Cys125, Cys111–Cys132, and Cys116–Cys123. Residues 93–132 form the Agouti domain; that stretch reads CVATRDSCKPPAPACCDPCASCQCRFFRSACSCRVLSLNC.

It is found in the secreted. Functionally, involved in the regulation of melanogenesis. The binding of ASP to MC1R precludes alpha-MSH initiated signaling and thus blocks production of cAMP, leading to a down-regulation of eumelanogenesis (brown/black pigment) and thus increasing synthesis of pheomelanin (yellow/red pigment). This chain is Agouti-signaling protein (ASIP), found in Trachypithecus auratus (Javan langur).